A 195-amino-acid chain; its full sequence is Glycerol-3-phosphate acyltransferase 1 (195 aa).

5 helical membrane passes run 6-26 (VILT…GHFL), 52-72 (LGIA…FLVV), 74-94 (LGLK…AVAG), 117-137 (LAVY…LTFL), and 168-188 (FGLG…ISLF).

The protein belongs to the PlsY family. In terms of assembly, probably interacts with PlsX.

The protein resides in the cell membrane. It catalyses the reaction an acyl phosphate + sn-glycerol 3-phosphate = a 1-acyl-sn-glycero-3-phosphate + phosphate. It functions in the pathway lipid metabolism; phospholipid metabolism. In terms of biological role, catalyzes the transfer of an acyl group from acyl-phosphate (acyl-PO(4)) to glycerol-3-phosphate (G3P) to form lysophosphatidic acid (LPA). This enzyme utilizes acyl-phosphate as fatty acyl donor, but not acyl-CoA or acyl-ACP. The polypeptide is Glycerol-3-phosphate acyltransferase 1 (Moorella thermoacetica (strain ATCC 39073 / JCM 9320)).